We begin with the raw amino-acid sequence, 628 residues long: Probable alpha-L-arabinofuranosidase A (628 aa).

An N-terminal signal peptide occupies residues 1–25; that stretch reads MVAFSALSGVSALSLLLCLVQHAHG. N-linked (GlcNAc...) asparagine glycosylation is found at asparagine 36, asparagine 51, asparagine 74, asparagine 152, asparagine 171, asparagine 260, asparagine 359, and asparagine 493.

It belongs to the glycosyl hydrolase 51 family.

It is found in the secreted. The enzyme catalyses Hydrolysis of terminal non-reducing alpha-L-arabinofuranoside residues in alpha-L-arabinosides.. It functions in the pathway glycan metabolism; L-arabinan degradation. In terms of biological role, alpha-L-arabinofuranosidase involved in the degradation of arabinoxylan, a major component of plant hemicellulose. Acts only on small linear 1,5-alpha-linked L-arabinofuranosyl oligosaccharides. This Aspergillus awamori (Black koji mold) protein is Probable alpha-L-arabinofuranosidase A (abfA).